Here is a 4144-residue protein sequence, read N- to C-terminus: DNA-dependent protein kinase catalytic subunit (4144 aa).

Lys127 is modified (N6-acetyllysine). An HEAT 1 repeat occupies 298–333 (DNYVSLFEVLSKWCSHTNVEMKKAAHSALESFLKQV). Ser521, Ser851, and Ser903 each carry phosphoserine. One copy of the HEAT 2 repeat lies at 1014 to 1050 (QDTVALLETILDGIVDPVDSTLRDFCGRCIREFLKWS). Position 1075 is a phosphoserine (Ser1075). Position 1219 is an N6-acetyllysine (Lys1219). The interval 1516–1551 (LDPSCKRLASGLLELAFAFGGLCEHLVDLLLDTAVL) is interaction with C1D. The leucine-zipper stretch occupies residues 1516–1551 (LDPSCKRLASGLLELAFAFGGLCEHLVDLLLDTAVL). The stretch at 1736–1769 (PMKSEEFPVGTLRYSNYVDCMKKFLDALELSQSP) is one TPR 1 repeat. The residue at position 1983 (Lys1983) is an N6-acetyllysine. Ser2069 is modified (phosphoserine; by autocatalysis). Lys2271 carries the N6-acetyllysine modification. Residues 2448–3228 (LDIIYKMMAK…DHSLSMDEER (781 aa)) are KIP-binding. Thr2547 is subject to Phosphothreonine. A Phosphothreonine; by autocatalysis modification is found at Thr2621. Ser2624 carries the post-translational modification Phosphoserine; by autocatalysis. Residues Thr2650 and Thr2659 each carry the phosphothreonine; by autocatalysis modification. The tract at residues 2697 to 2729 (AQKRNEKSQRAPLKSVGPDFGEKKLGLPGDKVD) is disordered. Over residues 2716 to 2729 (FGEKKLGLPGDKVD) the composition is skewed to basic and acidic residues. The interval 2753 to 2781 (EKLSLIYARKGIAEQKREKEIKSELKMKH) is may split the end of the DNA molecule, with the two strands separating around the region. The residue at position 2805 (Ser2805) is a Phosphoserine. TPR repeat units follow at residues 2903–2935 (PVGVRLLEEALLHLGPQEPPAKQFKGRMRVSPD), 2936–2964 (VVRWMELAKLYRSIGEYDILRGIFSSEIG), and 2965–2998 (TKQITQSAIFAEARSDYSEAAKQYNEALNKEEWV). The FAT domain maps to 2922-3555 (PAKQFKGRMR…VYPFIISSES (634 aa)). Position 3221 is a phosphoserine (Ser3221). Residues Lys3257, Lys3276, Lys3654, and Lys3658 each carry the N6-acetyllysine modification. Residues 3711–3748 (LRNELEIPGQYDGKGKPLPEYHARIAGFDERIKVMASI) form a TPR 5 repeat. A PI3K/PI4K catalytic domain is found at 3738–4069 (FDERIKVMAS…IHYAKRKLAG (332 aa)). Residues 3744–3750 (VMASIRK) form a G-loop region. A phosphoserine mark is found at Ser3747 and Ser3837. The catalytic loop stretch occupies residues 3935-3943 (GIGDRHLNN). An activation loop region spans residues 3955–3980 (GIDFGHAFGSATQFLPVPELMPFRLT). Phosphoserine is present on Ser4042. The FATC domain occupies 4112–4144 (NGLSEEAQVKCLIDQATDPNILGRTWIGWEPWM).

Belongs to the PI3/PI4-kinase family. In terms of assembly, DNA-PK is a heterotrimer of PRKDC and the Ku dimer (composed of XRCC6/Ku70 and XRCC5/Ku86). Formation of this complex may be promoted by interaction with ILF3. Component of the core long-range non-homologous end joining (NHEJ) complex (also named DNA-PK complex) composed of PRKDC, LIG4, XRCC4, XRCC6/Ku70, XRCC5/Ku86 and NHEJ1/XLF. Additional component of the NHEJ complex includes PAXX. Following autophosphorylation, PRKDC dissociates from DNA. Interacts with DNA-PKcs-interacting protein (KIP) with the region upstream the kinase domain. PRKDC alone also interacts with and phosphorylates DCLRE1C, thereby activating the latent endonuclease activity of this protein. Interacts with C1D. Interacts with TTI1 and TELO2. Interacts with CIB1. Interacts with SETX. Interacts with NR4A3; the DNA-dependent protein kinase complex DNA-PK phosphorylates and activates NR4A3 and prevents NR4A3 ubiquitination and degradation. Interacts with BRAT1. Part of the HDP-RNP complex composed of at least HEXIM1, PRKDC, XRCC5, XRCC6, paraspeckle proteins (SFPQ, NONO, PSPC1, RBM14, and MATR3) and NEAT1 RNA. Interacts with KAT5. Autophosphorylated at two clusters, the T2609 cluster and the S2056 cluster. Autophosphorylated on Ser-2069, Thr-2621, Thr-2650 and Thr-2659. Ser-2069 and Thr-2621 are DNA damage-inducible phosphorylation sites (inducible with ionizing radiation, IR) dephosphorylated by PPP5C. Autophosphorylation induces a conformational change that leads to remodeling of the DNA-PK complex, requisite for efficient end processing and DNA repair. Autophosphorylation in trans within DNA-PK complexes loaded on DNA ends leads to the dissociation of PRKDC from DNA and the transition into the short-range NHEJ complex. Autophosphorylation of the T2609 cluster is required for hematopoietic development and protein synthesis in erythrocytes precursors. In terms of processing, S-nitrosylated by GAPDH. Post-translationally, polyubiquitinated by RNF144A, leading to proteasomal degradation.

The protein resides in the nucleus. The protein localises to the nucleolus. It localises to the cytoplasm. It is found in the cytosol. It catalyses the reaction L-seryl-[protein] + ATP = O-phospho-L-seryl-[protein] + ADP + H(+). The catalysed reaction is L-threonyl-[protein] + ATP = O-phospho-L-threonyl-[protein] + ADP + H(+). Activity seems to be attenuated by autophosphorylation. Binding to the SL1 region of U3 small nucleolar RNA promotes auto-phosphorylation activity. Inhibited by wortmannin. Functionally, serine/threonine-protein kinase that acts as a molecular sensor for DNA damage. Involved in DNA non-homologous end joining (NHEJ) required for double-strand break (DSB) repair and V(D)J recombination. Must be bound to DNA to express its catalytic properties. Promotes processing of hairpin DNA structures in V(D)J recombination by activation of the hairpin endonuclease artemis (DCLRE1C). Recruited by XRCC5 and XRCC6 to DNA ends and is required to (1) protect and align broken ends of DNA, thereby preventing their degradation, (2) and sequester the DSB for repair by NHEJ. Acts as a scaffold protein to aid the localization of DNA repair proteins to the site of damage. The assembly of the DNA-PK complex at DNA ends is also required for the NHEJ ligation step. Found at the ends of chromosomes, suggesting a further role in the maintenance of telomeric stability and the prevention of chromosomal end fusion. Also involved in modulation of transcription. As part of the DNA-PK complex, involved in the early steps of ribosome assembly by promoting the processing of precursor rRNA into mature 18S rRNA in the small-subunit processome. Binding to U3 small nucleolar RNA, recruits PRKDC and XRCC5/Ku86 to the small-subunit processome. Recognizes the substrate consensus sequence [ST]-Q. Phosphorylates 'Ser-139' of histone variant H2AX, thereby regulating DNA damage response mechanism. Phosphorylates ASF1A, DCLRE1C, c-Abl/ABL1, histone H1, HSPCA, c-jun/JUN, p53/TP53, PARP1, POU2F1, DHX9, FH, SRF, NHEJ1/XLF, XRCC1, XRCC4, XRCC5, XRCC6, WRN, MYC and RFA2. Can phosphorylate C1D not only in the presence of linear DNA but also in the presence of supercoiled DNA. Ability to phosphorylate p53/TP53 in the presence of supercoiled DNA is dependent on C1D. Acts as a regulator of the phosphatidylinositol 3-kinase/protein kinase B signal transduction by mediating phosphorylation of 'Ser-473' of protein kinase B (PKB/AKT1, PKB/AKT2, PKB/AKT3), promoting their activation. Contributes to the determination of the circadian period length by antagonizing phosphorylation of CRY1 'Ser-588' and increasing CRY1 protein stability, most likely through an indirect mechanism. Plays a role in the regulation of DNA virus-mediated innate immune response by assembling into the HDP-RNP complex, a complex that serves as a platform for IRF3 phosphorylation and subsequent innate immune response activation through the cGAS-STING pathway. Also regulates the cGAS-STING pathway by catalyzing phosphorylation of CGAS, thereby impairing CGAS oligomerization and activation. Also regulates the cGAS-STING pathway by mediating phosphorylation of PARP1. In Canis lupus familiaris (Dog), this protein is DNA-dependent protein kinase catalytic subunit (PRKDC).